The primary structure comprises 142 residues: Large ribosomal subunit protein uL13 (142 aa).

The protein belongs to the universal ribosomal protein uL13 family. In terms of assembly, part of the 50S ribosomal subunit.

Functionally, this protein is one of the early assembly proteins of the 50S ribosomal subunit, although it is not seen to bind rRNA by itself. It is important during the early stages of 50S assembly. The chain is Large ribosomal subunit protein uL13 from Polynucleobacter asymbioticus (strain DSM 18221 / CIP 109841 / QLW-P1DMWA-1) (Polynucleobacter necessarius subsp. asymbioticus).